Here is a 457-residue protein sequence, read N- to C-terminus: Chromosomal replication initiator protein DnaA (457 aa).

Residues 1–81 (MERDLSQLWQ…NNTDLVIKVQ (81 aa)) form a domain I, interacts with DnaA modulators region. The tract at residues 81 to 119 (QEGSKPAARKVVAQQEIANTPVQHSAPMPENEPQAAFRS) is domain II. A domain III, AAA+ region region spans residues 120–337 (NLNQHHLFEN…GALNRVHANA (218 aa)). ATP is bound by residues G165, G167, K168, and T169. The interval 338-457 (DFTGKAITID…WSNLIRTLSA (120 aa)) is domain IV, binds dsDNA.

It belongs to the DnaA family. Oligomerizes as a right-handed, spiral filament on DNA at oriC.

The protein localises to the cytoplasm. Functionally, plays an essential role in the initiation and regulation of chromosomal replication. ATP-DnaA binds to the origin of replication (oriC) to initiate formation of the DNA replication initiation complex once per cell cycle. Binds the DnaA box (a 9 base pair repeat at the origin) and separates the double-stranded (ds)DNA. Forms a right-handed helical filament on oriC DNA; dsDNA binds to the exterior of the filament while single-stranded (ss)DNA is stabiized in the filament's interior. The ATP-DnaA-oriC complex binds and stabilizes one strand of the AT-rich DNA unwinding element (DUE), permitting loading of DNA polymerase. After initiation quickly degrades to an ADP-DnaA complex that is not apt for DNA replication. Binds acidic phospholipids. This Mannheimia succiniciproducens (strain KCTC 0769BP / MBEL55E) protein is Chromosomal replication initiator protein DnaA.